We begin with the raw amino-acid sequence, 255 residues long: Phosphate import ATP-binding protein PstB (255 aa).

The ABC transporter domain maps to 10–250 (INIKDLNLWY…PQMKSTEDYI (241 aa)). Residue 42 to 49 (GPSGCGKS) participates in ATP binding.

It belongs to the ABC transporter superfamily. Phosphate importer (TC 3.A.1.7) family. The complex is composed of two ATP-binding proteins (PstB), two transmembrane proteins (PstC and PstA) and a solute-binding protein (PstS).

The protein resides in the cell membrane. It carries out the reaction phosphate(out) + ATP + H2O = ADP + 2 phosphate(in) + H(+). Part of the ABC transporter complex PstSACB involved in phosphate import. Responsible for energy coupling to the transport system. This chain is Phosphate import ATP-binding protein PstB, found in Methanococcoides burtonii (strain DSM 6242 / NBRC 107633 / OCM 468 / ACE-M).